Reading from the N-terminus, the 179-residue chain is Large ribosomal subunit protein uL5 (179 aa).

The protein belongs to the universal ribosomal protein uL5 family. In terms of assembly, part of the 50S ribosomal subunit; part of the 5S rRNA/L5/L18/L25 subcomplex. Contacts the 5S rRNA and the P site tRNA. Forms a bridge to the 30S subunit in the 70S ribosome.

Functionally, this is one of the proteins that bind and probably mediate the attachment of the 5S RNA into the large ribosomal subunit, where it forms part of the central protuberance. In the 70S ribosome it contacts protein S13 of the 30S subunit (bridge B1b), connecting the 2 subunits; this bridge is implicated in subunit movement. Contacts the P site tRNA; the 5S rRNA and some of its associated proteins might help stabilize positioning of ribosome-bound tRNAs. In Pseudomonas paraeruginosa (strain DSM 24068 / PA7) (Pseudomonas aeruginosa (strain PA7)), this protein is Large ribosomal subunit protein uL5.